Consider the following 929-residue polypeptide: MSPSRPAADERFDSARVAAEIATLAEKHTGNDAAFRTALAMLMKAELAKARTEAEAQLLRDRHGRRCAERLCYVQDAIIRLLFNAATEYLYNTPTPSSSERMTVVATGGYGRGLMAPESDIDLLFILPYKQTAWGEQVAEVILYCLWDIGLKVGHATRSVDECIRQARADMTIRTAILETRFLAGDEALYAELVERFDKEVVEGTAAEFVAAKLAEREERHRRSGQSRYLVEPNVKDGKGGLRDLHTLFWIAKYVYRVREASELSERGVFDPAEFRTFRRCEDFLWSVRCNIHFVTKRAEDRLSFDLQREIGVRLGYTSHPGMQDVERFMKHYFLIAKEVGNLTAILCAKLEDQQAKAAPALTRMMARLRPAAKRRRVPESDDFVIDNNRINLAVPDVFKHDPVNLIRIFRLAQKNNLAFHPDAMRSVTRSLSLITPQLRDNPEANRLFVEILTSDNAEPVLRRMNETGVLGRFIRAFGRIVSMMQFNMYHSYTVDEHLIRCVGNLQEIERGGNDEFALSSELIRKIRPDHRAVLYAAVLLHDIAKGQPEDHSTAGAKVARRLCPRFGFSTADTELVAWLIEKHLVMSTVAQSRDLSDRKTIENFAAVVETVEQMKMLTILTTADIRGVGPGVWNGWKAQLIRTLYYETEPVLTGGFSEVNRAERIRAAQAEFRAAFTEWPEADLNAYVARHYPAYWLKVDLQRKIRHARFLRASEQAGHKLAINVGFDEARAVTELTILAVDHPWLLSVIAGACASAGANIVDAQIYTTTDGRALDTISISREYDRDEDEGRRATRIGETIEEVLEGKLRLPEAVARRASSGSKAKLRAFVVEPEVEINNNWSDRYTVIEVSGLDRPGLLYQLTTAISKLNLNIASAHVATFGERARDVFYVTDLLGAQITAPTRQAAIKRALVHLLANGDAAEKPAA.

The tract at residues 1-379 (MSPSRPAADE…RPAAKRRRVP (379 aa)) is uridylyltransferase. A uridylyl-removing region spans residues 380–735 (ESDDFVIDNN…VGFDEARAVT (356 aa)). The HD domain occupies 495-618 (VDEHLIRCVG…VETVEQMKML (124 aa)). 2 ACT domains span residues 736-818 (ELTI…AVAR) and 849-929 (VIEV…KPAA).

Belongs to the GlnD family. Requires Mg(2+) as cofactor.

The catalysed reaction is [protein-PII]-L-tyrosine + UTP = [protein-PII]-uridylyl-L-tyrosine + diphosphate. The enzyme catalyses [protein-PII]-uridylyl-L-tyrosine + H2O = [protein-PII]-L-tyrosine + UMP + H(+). With respect to regulation, uridylyltransferase (UTase) activity is inhibited by glutamine, while glutamine activates uridylyl-removing (UR) activity. Modifies, by uridylylation and deuridylylation, the PII regulatory proteins (GlnB and homologs), in response to the nitrogen status of the cell that GlnD senses through the glutamine level. Under low glutamine levels, catalyzes the conversion of the PII proteins and UTP to PII-UMP and PPi, while under higher glutamine levels, GlnD hydrolyzes PII-UMP to PII and UMP (deuridylylation). Thus, controls uridylylation state and activity of the PII proteins, and plays an important role in the regulation of nitrogen fixation and metabolism. The sequence is that of Bifunctional uridylyltransferase/uridylyl-removing enzyme from Rhodopseudomonas palustris (strain ATCC BAA-98 / CGA009).